The primary structure comprises 1145 residues: DNA mismatch repair protein msh-3 (1145 aa).

Disordered regions lie at residues 1–183 (MAGP…GAKT) and 857–879 (SSSA…LAQL). Positions 13 to 33 (ASISSFFTPRNTSPLVNLSQN) are enriched in polar residues. A compositionally biased stretch (basic and acidic residues) spans 121-131 (AERKKKEELHR). Over residues 158-169 (GEGEEGEDDEEE) the composition is skewed to acidic residues. The tract at residues 183–307 (TGKLTPMELQ…RKLTNVYTKG (125 aa)) is mispair-binding domain. ATP is bound at residue 882–889 (GPNMGGKS). The disordered stretch occupies residues 1030–1056 (KSRTSMDDDAMEVDGDGDGQEGAGADK). Residues 1036–1048 (DDDAMEVDGDGDG) show a composition bias toward acidic residues.

It belongs to the DNA mismatch repair MutS family. MSH3 subfamily. As to quaternary structure, heterodimer consisting of msh-2-msh-3 (MutS beta). Forms a ternary complex with MutL alpha (mlh-1-pms-1).

It is found in the nucleus. Its function is as follows. Component of the post-replicative DNA mismatch repair system (MMR). Heterodimerizes with msh-2 to form MutS beta, which binds to DNA mismatches thereby initiating DNA repair. Msh-3 provides substrate-binding and substrate specificity to the complex. When bound, the MutS beta heterodimer bends the DNA helix and shields approximately 20 base pairs. Acts mainly to repair insertion-deletion loops (IDLs) from 2 to 13 nucleotides in size, but can also repair base-base and single insertion-deletion mismatches that occur during replication. After mismatch binding, forms a ternary complex with the MutL alpha heterodimer, which is thought to be responsible for directing the downstream MMR events, including strand discrimination, excision, and resynthesis. ATP binding and hydrolysis play a pivotal role in mismatch repair functions. In Neurospora crassa (strain ATCC 24698 / 74-OR23-1A / CBS 708.71 / DSM 1257 / FGSC 987), this protein is DNA mismatch repair protein msh-3 (msh-3).